Reading from the N-terminus, the 911-residue chain is Protein translocase subunit SecA (911 aa).

ATP contacts are provided by residues Gln86, 104-108 (GEGKT), and Asp512. A disordered region spans residues 869 to 888 (ALADDGQPQGAQPVRNVLPK). 4 residues coordinate Zn(2+): Cys895, Cys897, Cys906, and His907.

The protein belongs to the SecA family. Monomer and homodimer. Part of the essential Sec protein translocation apparatus which comprises SecA, SecYEG and auxiliary proteins SecDF-YajC and YidC. Requires Zn(2+) as cofactor.

It is found in the cell inner membrane. It localises to the cytoplasm. The catalysed reaction is ATP + H2O + cellular proteinSide 1 = ADP + phosphate + cellular proteinSide 2.. Functionally, part of the Sec protein translocase complex. Interacts with the SecYEG preprotein conducting channel. Has a central role in coupling the hydrolysis of ATP to the transfer of proteins into and across the cell membrane, serving both as a receptor for the preprotein-SecB complex and as an ATP-driven molecular motor driving the stepwise translocation of polypeptide chains across the membrane. In Bordetella parapertussis (strain 12822 / ATCC BAA-587 / NCTC 13253), this protein is Protein translocase subunit SecA.